The sequence spans 173 residues: Co-chaperone protein HscB homolog (173 aa).

The J domain occupies 3–75 (NPFSLFNLPV…IARATAIIEI (73 aa)).

It belongs to the HscB family. As to quaternary structure, interacts with HscA and stimulates its ATPase activity.

Its function is as follows. Co-chaperone involved in the maturation of iron-sulfur cluster-containing proteins. Seems to help targeting proteins to be folded toward HscA. The protein is Co-chaperone protein HscB homolog of Haemophilus ducreyi (strain 35000HP / ATCC 700724).